The sequence spans 270 residues: 3-methyl-2-oxobutanoate hydroxymethyltransferase (270 aa).

Mg(2+) contacts are provided by Asp50 and Asp89. 3-methyl-2-oxobutanoate contacts are provided by residues 50–51, Asp89, and Lys118; that span reads DS. Glu120 serves as a coordination point for Mg(2+). Catalysis depends on Glu187, which acts as the Proton acceptor.

The protein belongs to the PanB family. In terms of assembly, homodecamer; pentamer of dimers. The cofactor is Mg(2+).

It localises to the cytoplasm. The enzyme catalyses 3-methyl-2-oxobutanoate + (6R)-5,10-methylene-5,6,7,8-tetrahydrofolate + H2O = 2-dehydropantoate + (6S)-5,6,7,8-tetrahydrofolate. It participates in cofactor biosynthesis; (R)-pantothenate biosynthesis; (R)-pantoate from 3-methyl-2-oxobutanoate: step 1/2. In terms of biological role, catalyzes the reversible reaction in which hydroxymethyl group from 5,10-methylenetetrahydrofolate is transferred onto alpha-ketoisovalerate to form ketopantoate. The protein is 3-methyl-2-oxobutanoate hydroxymethyltransferase of Helicobacter pylori (strain Shi470).